The sequence spans 874 residues: Alanine--tRNA ligase (874 aa).

Zn(2+)-binding residues include His-563, His-567, Cys-665, and His-669.

It belongs to the class-II aminoacyl-tRNA synthetase family. Zn(2+) serves as cofactor.

It is found in the cytoplasm. It catalyses the reaction tRNA(Ala) + L-alanine + ATP = L-alanyl-tRNA(Ala) + AMP + diphosphate. Catalyzes the attachment of alanine to tRNA(Ala) in a two-step reaction: alanine is first activated by ATP to form Ala-AMP and then transferred to the acceptor end of tRNA(Ala). Also edits incorrectly charged Ser-tRNA(Ala) and Gly-tRNA(Ala) via its editing domain. The sequence is that of Alanine--tRNA ligase from Haemophilus influenzae (strain 86-028NP).